Reading from the N-terminus, the 474-residue chain is Phosphomannomutase (474 aa).

Ser-101 acts as the Phosphoserine intermediate in catalysis. Positions 101, 242, 244, and 246 each coordinate Mg(2+).

This sequence belongs to the phosphohexose mutase family. It depends on Mg(2+) as a cofactor.

It carries out the reaction alpha-D-mannose 1-phosphate = D-mannose 6-phosphate. This chain is Phosphomannomutase (noeK), found in Sinorhizobium fredii (strain NBRC 101917 / NGR234).